A 474-amino-acid polypeptide reads, in one-letter code: Proline--tRNA ligase (474 aa).

It belongs to the class-II aminoacyl-tRNA synthetase family. ProS type 3 subfamily. Homodimer.

It localises to the cytoplasm. It catalyses the reaction tRNA(Pro) + L-proline + ATP = L-prolyl-tRNA(Pro) + AMP + diphosphate. Functionally, catalyzes the attachment of proline to tRNA(Pro) in a two-step reaction: proline is first activated by ATP to form Pro-AMP and then transferred to the acceptor end of tRNA(Pro). This is Proline--tRNA ligase from Aster yellows witches'-broom phytoplasma (strain AYWB).